The following is a 512-amino-acid chain: Sugar transport protein MST7 (512 aa).

The Cytoplasmic portion of the chain corresponds to 1–17; that stretch reads MENAGAGDGAPKHYPGK. Residues 18 to 38 traverse the membrane as a helical segment; sequence MTVFVFIACLVASSGGLIFGY. At 39-81 the chain is on the extracellular side; sequence DIGISGGVTSMDPFLSRFFPSVYAKEKEVVDTNQYCKFDSEPL. A helical transmembrane segment spans residues 82-102; it reads TLFTSSLYLAALIASLFASVI. Over 103–116 the chain is Cytoplasmic; sequence TRKLGRKMTMLGGG. Residues 117 to 137 traverse the membrane as a helical segment; it reads FIFLIGAVLNGAAVNVAMLII. Over 138-139 the chain is Extracellular; sequence GR. The chain crosses the membrane as a helical span at residues 140-160; that stretch reads ILLGIGVGFSIQAVPLYLSEM. The Cytoplasmic portion of the chain corresponds to 161–166; that stretch reads APAKMR. Residues 167–187 traverse the membrane as a helical segment; it reads GMLNIIFQLMITVGILFANLI. At 188–201 the chain is on the extracellular side; sequence NYFTDKIAGGWGWR. The chain crosses the membrane as a helical span at residues 202–222; that stretch reads VSLGLAAVPAVIMTVGSILLP. The Cytoplasmic segment spans residues 223 to 294; the sequence is DTPNSLLSRG…MSVLIPTLQQ (72 aa). Residues 295–315 form a helical membrane-spanning segment; it reads LTGINVVMFYAPVLFKTIGFG. Topologically, residues 316–320 are extracellular; that stretch reads GTASL. Residues 321 to 341 traverse the membrane as a helical segment; it reads MSAVITGLVNMFATFVSIATV. Residues 342-347 are Cytoplasmic-facing; sequence DRFGRR. A helical transmembrane segment spans residues 348–368; that stretch reads VLFIQGGIQMIIAQFILGTLI. At 369–385 the chain is on the extracellular side; it reads AVKFGTAGVANISQGYA. The helical transmembrane segment at 386–406 threads the bilayer; it reads IVVVLFICLFVSAFAWSWGPL. The Cytoplasmic segment spans residues 407–425; sequence GWLVPSEIFPLEIRSAAQS. A helical membrane pass occupies residues 426–446; sequence VVVVFNMAFTFFIAQIFLMML. Residues 447-450 lie on the Extracellular side of the membrane; it reads CRLK. A helical membrane pass occupies residues 451–471; that stretch reads FGLFFFFGAMELIMTGFVLVF. At 472-512 the chain is on the cytoplasmic side; the sequence is LPETKGIPIEEMDRIWGEHWYWSRFVGAGRNRVMQMASTNV.

It belongs to the major facilitator superfamily. Sugar transporter (TC 2.A.1.1) family.

The protein localises to the membrane. In terms of biological role, mediates active uptake of hexoses by sugar:proton symport. The sequence is that of Sugar transport protein MST7 from Oryza sativa subsp. japonica (Rice).